The primary structure comprises 298 residues: Cyclic dof factor 1 (298 aa).

The interval 27-46 (EEEEKNQNKTLTDQSEKDKT) is disordered. The segment at 54 to 108 (LPCPRCNSMETKFCYYNNYNVNQPRHFCKACQRYWTSGGTMRSVPIGAGRRKNKN) adopts a Dof-type zinc-finger fold. Zn(2+) contacts are provided by cysteine 56, cysteine 59, cysteine 81, and cysteine 84. The disordered stretch occupies residues 200–231 (SSSPTSTLGKHSRDEDETVKQKQRNGSVLVPK). Basic and acidic residues predominate over residues 210–219 (HSRDEDETVK).

In terms of assembly, interacts with ADO2 (via kelch repeats), ADO3 (via kelch repeats) and GI (via N-terminus). Ubiquitinated. Expressed in the vascular tissues of cotyledons, leaves and hypocotyls and in stomata. Not detected in roots.

The protein resides in the nucleus. Functionally, transcription factor that binds specifically to a 5'-AA[AG]G-3' consensus core sequence. A flanking TGT sequence contributes to the specificity of binding. Regulates a photoperiodic flowering response. Transcriptional repressor of 'CONSTANS' expression. The DNA-binding ability is not modulated by 'GIGANTEA' but the stability of CDF1 is controlled by the proteasome-dependent pathway. Ubiquitinated by the SCF(ADO3) E3 ubiquitin ligase complex. Binds to the FT promoter in the morning. This Arabidopsis thaliana (Mouse-ear cress) protein is Cyclic dof factor 1 (CDF1).